The chain runs to 162 residues: Cyclic pyranopterin monophosphate synthase (162 aa).

Substrate contacts are provided by residues 75-77 (LCH) and 113-114 (ME). Residue D128 is part of the active site.

Belongs to the MoaC family. Homohexamer; trimer of dimers.

The catalysed reaction is (8S)-3',8-cyclo-7,8-dihydroguanosine 5'-triphosphate = cyclic pyranopterin phosphate + diphosphate. Its pathway is cofactor biosynthesis; molybdopterin biosynthesis. Catalyzes the conversion of (8S)-3',8-cyclo-7,8-dihydroguanosine 5'-triphosphate to cyclic pyranopterin monophosphate (cPMP). This chain is Cyclic pyranopterin monophosphate synthase, found in Burkholderia orbicola (strain MC0-3).